A 482-amino-acid chain; its full sequence is Cobyric acid synthase (482 aa).

In terms of domain architecture, GATase cobBQ-type spans 243–430 (ACKVVVPQLE…LHGLFTSDAF (188 aa)). C325 acts as the Nucleophile in catalysis. The active site involves H422.

It belongs to the CobB/CobQ family. CobQ subfamily.

Its pathway is cofactor biosynthesis; adenosylcobalamin biosynthesis. In terms of biological role, catalyzes amidations at positions B, D, E, and G on adenosylcobyrinic A,C-diamide. NH(2) groups are provided by glutamine, and one molecule of ATP is hydrogenolyzed for each amidation. This chain is Cobyric acid synthase, found in Ruegeria sp. (strain TM1040) (Silicibacter sp.).